A 570-amino-acid chain; its full sequence is Protein translocase subunit SecD (570 aa).

A compositionally biased stretch (polar residues) spans Gly104–Gly117. Residues Gly104–Thr198 are disordered. Residues Lys122 to Lys146 are compositionally biased toward basic and acidic residues. Low complexity-rich tracts occupy residues Ala147–Ser161 and Ala172–Asp196. The next 5 membrane-spanning stretches (helical) occupy residues Ala370–Tyr390, Phe395–Leu415, Ile419–Ala439, Ile474–Gly494, and Gly498–Thr518. The segment at Leu540 to Ala570 is disordered.

It belongs to the SecD/SecF family. SecD subfamily. As to quaternary structure, forms a complex with SecF. Part of the essential Sec protein translocation apparatus which comprises SecA, SecYEG and auxiliary proteins SecDF. Other proteins may also be involved.

It localises to the cell membrane. Its function is as follows. Part of the Sec protein translocase complex. Interacts with the SecYEG preprotein conducting channel. SecDF uses the proton motive force (PMF) to complete protein translocation after the ATP-dependent function of SecA. The polypeptide is Protein translocase subunit SecD (Streptomyces coelicolor (strain ATCC BAA-471 / A3(2) / M145)).